Here is a 228-residue protein sequence, read N- to C-terminus: Octanoyltransferase (228 aa).

Residues 31-212 form the BPL/LPL catalytic domain; sequence GETDGILILL…KFSEVFGIHF (182 aa). Substrate contacts are provided by residues 76–83, 143–145, and 156–158; these read RGGKITFH, AIG, and GIA. The active-site Acyl-thioester intermediate is cysteine 174.

This sequence belongs to the LipB family.

It is found in the cytoplasm. The catalysed reaction is octanoyl-[ACP] + L-lysyl-[protein] = N(6)-octanoyl-L-lysyl-[protein] + holo-[ACP] + H(+). It functions in the pathway protein modification; protein lipoylation via endogenous pathway; protein N(6)-(lipoyl)lysine from octanoyl-[acyl-carrier-protein]: step 1/2. In terms of biological role, catalyzes the transfer of endogenously produced octanoic acid from octanoyl-acyl-carrier-protein onto the lipoyl domains of lipoate-dependent enzymes. Lipoyl-ACP can also act as a substrate although octanoyl-ACP is likely to be the physiological substrate. This Thermoanaerobacter sp. (strain X514) protein is Octanoyltransferase.